A 746-amino-acid polypeptide reads, in one-letter code: Steroid receptor seven-up, isoform A (746 aa).

The disordered stretch occupies residues 38-191 (PPHSAWHEPP…HSQSSNSGSQ (154 aa)). The span at 56–68 (AASAGPGTTTGSV) shows a compositional bias: low complexity. Positions 83 to 101 (QQSAVIKQDLSCPSLNQAG) are enriched in polar residues. Residues 122-141 (GSAGGHHSGSGSGSGSGVNP) are compositionally biased toward gly residues. The span at 158–170 (MLTSIKGQPTGCG) shows a compositional bias: polar residues. A compositionally biased stretch (low complexity) spans 171 to 191 (STTPSSQANSSHSQSSNSGSQ). The segment at residues 197-272 (NIECVVCGDK…MGMRREAVQR (76 aa)) is a DNA-binding region (nuclear receptor). 2 consecutive NR C4-type zinc fingers follow at residues 200–220 (CVVCGDKSSGKHYGQFTCEGC) and 236–260 (CRGSRNCPIDQHHRNQCQYCRLKKC). An NR LBD domain is found at 307–556 (YLSSYISLLL…PLVPSAGSAF (250 aa)). The interval 579–645 (QATPPSSGGG…APAPVPTSSV (67 aa)) is disordered. Residues 592–605 (GHNNSSGLGASLPT) show a composition bias toward polar residues. The span at 606–645 (QSQSGSSSRNLTASPLSTSLATAPAPASASAPAPVPTSSV) shows a compositional bias: low complexity.

It belongs to the nuclear hormone receptor family. NR2 subfamily. In terms of tissue distribution, expressed in several embryonic tissues; dorsal vessel, oenocyte and fat body. CNS expression is dynamic and confined to temporally restricted subsections of the NB lineage; expressed in many NB and GMCs, but only a small number of neurons.

It localises to the nucleus. In terms of biological role, receptor that is required in photoreceptors R1, R3, R4 and R6 during eye development; generation of the ganglion mother cell-2 (GMC-2) fate in the nb7-3 lineage, coinciding with the transition in the expression of HB to KR in the neuroblasts (NBs). This is Steroid receptor seven-up, isoform A (svp) from Drosophila melanogaster (Fruit fly).